The primary structure comprises 198 residues: LexA repressor (198 aa).

The segment at residues Ile-28–Leu-47 is a DNA-binding region (H-T-H motif). Residues Ser-120 and Lys-157 each act as for autocatalytic cleavage activity in the active site.

This sequence belongs to the peptidase S24 family. In terms of assembly, homodimer.

The enzyme catalyses Hydrolysis of Ala-|-Gly bond in repressor LexA.. Functionally, represses a number of genes involved in the response to DNA damage (SOS response), including recA and lexA. In the presence of single-stranded DNA, RecA interacts with LexA causing an autocatalytic cleavage which disrupts the DNA-binding part of LexA, leading to derepression of the SOS regulon and eventually DNA repair. The polypeptide is LexA repressor (Thermosipho africanus (strain TCF52B)).